The chain runs to 208 residues: Sodium/potassium-transporting ATPase subunit beta-1-interacting protein 4 (208 aa).

Transmembrane regions (helical) follow at residues 35–55 (APILANFVHIIIVILGLFGTI), 62–82 (VMVYTLWAAVWVTWNVFIICF), and 151–171 (CLQILIALLGFVCGCQVVSVF).

It belongs to the NKAIN family. As to quaternary structure, interacts with ATP1B1.

It localises to the cell membrane. The chain is Sodium/potassium-transporting ATPase subunit beta-1-interacting protein 4 (NKAIN4) from Homo sapiens (Human).